Here is a 338-residue protein sequence, read N- to C-terminus: (2Z,6E)-hedycaryol synthase (338 aa).

2 residues coordinate Mg(2+): Asp82 and Glu87. Positions 82–87 match the DDXXXE motif motif; sequence DDQIDE. Arg175 serves as a coordination point for substrate. Mg(2+) is bound by residues Asn221 and Ser225. Residues 221-229 carry the NXXXSXXXE motif motif; it reads NDVFSVERE. Substrate is bound at residue Arg228. Glu229 provides a ligand contact to Mg(2+).

The protein belongs to the terpene synthase family. As to quaternary structure, homodimer. The cofactor is Mg(2+).

It catalyses the reaction (2E,6E)-farnesyl diphosphate + H2O = (2Z,6E)-hedycaryol + diphosphate. The protein operates within secondary metabolite biosynthesis; terpenoid biosynthesis. Its function is as follows. Catalyzes the conversion of (2E,6E)-farnesyl diphosphate (FPP) into (2Z,6E)-hedycaryol via a 1,11-cyclization. In Kitasatospora setae (strain ATCC 33774 / DSM 43861 / JCM 3304 / KCC A-0304 / NBRC 14216 / KM-6054) (Streptomyces setae), this protein is (2Z,6E)-hedycaryol synthase.